Reading from the N-terminus, the 183-residue chain is Capsid protein (183 aa).

Positions 143 to 183 (LPETTVVRRRGRSPRRRTPSPRRRRSKSPRRRRSQSRESQC) are disordered. Residues 149-176 (VRRRGRSPRRRTPSPRRRRSKSPRRRRS) show a composition bias toward basic residues. 3 positions are modified to phosphoserine; by host: Ser-155, Ser-162, and Ser-170. A 1; half-length repeat occupies 155 to 160 (SPRRRT). Positions 155–176 (SPRRRTPSPRRRRSKSPRRRRS) are 3 X 7 AA repeats of S-P-R-R-R-[PR]-S. The Bipartite nuclear localization signal motif lies at 158 to 175 (RRTPSPRRRRSKSPRRRR). Tandem repeats lie at residues 162-168 (SPRRRRS) and 170-176 (SPRRRRS). Residues 177–183 (QSRESQC) are RNA binding.

It belongs to the orthohepadnavirus core antigen family. In terms of assembly, homodimerizes, then multimerizes. Interacts with cytosol exposed regions of viral L glycoprotein present in the reticulum-to-Golgi compartment. Interacts with human FLNB. Phosphorylated form interacts with host importin alpha; this interaction depends on the exposure of the NLS, which itself depends upon genome maturation and/or phosphorylation of the capsid protein. Interacts with host NUP153. Phosphorylated by host SRPK1, SRPK2, and maybe protein kinase C or GAPDH. Phosphorylation is critical for pregenomic RNA packaging. Protein kinase C phosphorylation is stimulated by HBx protein and may play a role in transport of the viral genome to the nucleus at the late step during the viral replication cycle.

It localises to the virion. The protein localises to the host cytoplasm. Functionally, self assembles to form an icosahedral capsid. Most capsids appear to be large particles with an icosahedral symmetry of T=4 and consist of 240 copies of capsid protein, though a fraction forms smaller T=3 particles consisting of 180 capsid proteins. Entering capsids are transported along microtubules to the nucleus. Phosphorylation of the capsid is thought to induce exposure of nuclear localization signal in the C-terminal portion of the capsid protein that allows binding to the nuclear pore complex via the importin (karyopherin-) alpha and beta. Capsids are imported in intact form through the nuclear pore into the nuclear basket, where it probably binds NUP153. Only capsids that contain the mature viral genome can release the viral DNA and capsid protein into the nucleoplasm. Immature capsids get stuck in the basket. Capsids encapsulate the pre-genomic RNA and the P protein. Pre-genomic RNA is reverse-transcribed into DNA while the capsid is still in the cytoplasm. The capsid can then either be directed to the nucleus, providing more genomes for transcription, or bud through the endoplasmic reticulum to provide new virions. The polypeptide is Capsid protein (Homo sapiens (Human)).